Reading from the N-terminus, the 706-residue chain is Complement C1r-B subcomponent (706 aa).

The signal sequence occupies residues 1 to 16 (MWLFALLVTLFYGVEG). Residues 17–140 (SIYLPQKLYG…KGFLAYYQAV (124 aa)) enclose the CUB 1 domain. Positions 65, 73, and 118 each coordinate Ca(2+). C70 and C88 form a disulfide bridge. The N-linked (GlcNAc...) asparagine glycan is linked to N124. Ca(2+) contacts are provided by D141, L142, and E144. Residues 141-189 (DLDECASQPNSVEEGLQPRCQHLCHNYVGGYFCSCHPGYELQKDGQSCQ) enclose the EGF-like; calcium-binding domain. 4 disulfides stabilise this stretch: C145–C164, C160–C173, C175–C188, and C192–C219. Ca(2+) is bound by residues N166, Y167, and G170. At N166 the chain carries (3R)-3-hydroxyasparagine. The CUB 2 domain maps to 192-304 (CSSELYTEPS…RGWKLHYTTE (113 aa)). A Phosphoserine; by CK2 modification is found at S205. Residue N220 is glycosylated (N-linked (GlcNAc...) asparagine). Ca(2+) contacts are provided by D242, D252, D289, and D293. C249 and C267 form a disulfide bridge. Sushi domains are found at residues 306–372 (IKCP…RCKI) and 373–448 (KNCG…RCLP). 5 cysteine pairs are disulfide-bonded: C308–C357, C337–C370, C375–C428, C405–C446, and C450–C578. Positions 463–703 (IIGGQPARPG…YVDWIKKEMG (241 aa)) constitute a Peptidase S1 domain. Catalysis depends on charge relay system residues H501 and D558. Residue N582 is glycosylated (N-linked (GlcNAc...) asparagine). Disulfide bonds link C621-C640 and C651-C681. Catalysis depends on S655, which acts as the Charge relay system.

It belongs to the peptidase S1 family. In terms of assembly, core component of the complement C1 complex, a calcium-dependent complex composed of 1 molecule of the C1Q subcomplex, 2 molecules of C1R and 2 molecules of C1S. The C1Q subcomplex is composed 18 subunits: 3 chains of C1QA, C1QB, and C1QC trimerize to form 6 collagen-like triple helices connected to six globular ligand-recognition modules. Within the C1 complex, C1R is a dimer of identical chains, each of which is activated by cleavage into two chains, heavy and light, connected by disulfide bonds. Cleaved and activated by autocatalytic processing to generate Complement C1r subcomponent heavy and light chains that are connected by disulfide bonds. Post-translationally, the iron and 2-oxoglutarate dependent 3-hydroxylation of aspartate and asparagine is (R) stereospecific within EGF domains.

It is found in the secreted. The protein localises to the cell surface. It carries out the reaction Selective cleavage of Lys(or Arg)-|-Ile bond in complement subcomponent C1s to form the active form of C1s (EC 3.4.21.42).. With respect to regulation, activated by the C1Q subcomplex of the C1 complex following C1Q binding to immunoglobulins (IgG or IgM) complexed with antigens to form antigen-antibody complexes on the surface of pathogens. Immunoglobulin-binding promotes autoactivation of C1R, which results in the cleavage of the Arg-Ile bond in the catalytic domain. Serine protease component of the complement C1 complex, a multiprotein complex that initiates the classical pathway of the complement system, a cascade of proteins that leads to phagocytosis and breakdown of pathogens and signaling that strengthens the adaptive immune system. C1R catalyzes the first enzymatic step in the classical complement pathway: it is activated by the C1Q subcomplex of the C1 complex, which associates with IgG or IgM immunoglobulins complexed with antigens to form antigen-antibody complexes on the surface of pathogens. Immunoglobulin-binding promotes the autocatalytic cleavage and activation of C1R. Activated C1R then cleaves and activates C1S, the second protease of the classical complement pathway. It is unclear if C1R activates C1S within single, strained C1 complexes or between neighboring C1 complexes on surfaces. The chain is Complement C1r-B subcomponent (C1rb) from Mus musculus (Mouse).